Consider the following 187-residue polypeptide: Shikimate kinase (187 aa).

14–19 (TSGKST) serves as a coordination point for ATP. A Mg(2+)-binding site is contributed by S18. Substrate contacts are provided by D36, R60, and G82. Residue R120 coordinates ATP. R147 contacts substrate.

It belongs to the shikimate kinase family. As to quaternary structure, monomer. Requires Mg(2+) as cofactor.

It localises to the cytoplasm. The enzyme catalyses shikimate + ATP = 3-phosphoshikimate + ADP + H(+). It participates in metabolic intermediate biosynthesis; chorismate biosynthesis; chorismate from D-erythrose 4-phosphate and phosphoenolpyruvate: step 5/7. In terms of biological role, catalyzes the specific phosphorylation of the 3-hydroxyl group of shikimic acid using ATP as a cosubstrate. This Chloroherpeton thalassium (strain ATCC 35110 / GB-78) protein is Shikimate kinase.